The primary structure comprises 425 residues: C2H2 type master regulator of conidiophore development brlA (425 aa).

3 disordered regions span residues 28 to 72 (MASS…RHTG), 232 to 257 (KTHS…PMSR), and 281 to 301 (VQRQ…SLSL). Residues 30 to 44 (SSFSPMESPTPTPTS) are compositionally biased toward low complexity. Polar residues predominate over residues 232-256 (KTHSPTTPVRSCSLGTTSGTDTPMS). Residues 285-294 (PSRKVARKQS) are compositionally biased toward basic residues. 2 C2H2-type zinc fingers span residues 321–345 (KGRF…PHVC) and 351–376 (ERAF…GRNR). A compositionally biased stretch (basic residues) spans 365–374 (TKTHSKRGGR). A disordered region spans residues 365–425 (TKTHSKRGGR…RETSEEAWLE (61 aa)).

Its subcellular location is the nucleus. BrlA, abaA and wetA are pivotal regulators of conidiophore development and conidium maturation. They act individually and together to regulate their own expression and that of numerous other sporulation-specific genes. Binds promoters of target genes at brlA response elements (BREs) containing the conserved sequence 5'-(C/A)(A/G)AGGG(G/A)-3'. Also coordinates the expression of carbohydrate-active enzymes and of the key effectors of cell wall remodeling during autolysis. This Aspergillus niger (strain ATCC MYA-4892 / CBS 513.88 / FGSC A1513) protein is C2H2 type master regulator of conidiophore development brlA.